A 192-amino-acid polypeptide reads, in one-letter code: Pyruvate synthase subunit PorC (192 aa).

In terms of assembly, heterotetramer of one alpha, one beta, one delta and one gamma chain.

It catalyses the reaction 2 oxidized [2Fe-2S]-[ferredoxin] + pyruvate + CoA = 2 reduced [2Fe-2S]-[ferredoxin] + acetyl-CoA + CO2 + H(+). In Thermotoga maritima (strain ATCC 43589 / DSM 3109 / JCM 10099 / NBRC 100826 / MSB8), this protein is Pyruvate synthase subunit PorC (porC).